We begin with the raw amino-acid sequence, 310 residues long: UPF0282 protein PF0593 (310 aa).

It belongs to the UPF0282 family.

The protein is UPF0282 protein PF0593 of Pyrococcus furiosus (strain ATCC 43587 / DSM 3638 / JCM 8422 / Vc1).